The sequence spans 452 residues: Probable ECA polymerase (452 aa).

A run of 11 helical transmembrane segments spans residues 6–26 (FSGL…LTWF), 37–57 (VFFS…TSVL), 63–83 (VGVA…CFYG), 118–138 (VILM…NGFL), 155–175 (GVAL…VYFL), 181–201 (AWLF…MIVG), 207–227 (IIIA…ISLW), 228–248 (MLAA…LKRY), 341–361 (LVVM…GMII), 378–398 (YKAA…IVLA), and 410–430 (VFFL…FWLF).

Belongs to the WzyE family. As to quaternary structure, probably part of a complex composed of WzxE, WzyE and WzzE.

The protein resides in the cell inner membrane. It participates in bacterial outer membrane biogenesis; enterobacterial common antigen biosynthesis. Its function is as follows. Probably involved in the polymerization of enterobacterial common antigen (ECA) trisaccharide repeat units. The chain is Probable ECA polymerase from Salmonella newport (strain SL254).